A 344-amino-acid chain; its full sequence is Methylthioribose-1-phosphate isomerase (344 aa).

Residues 46-48 (RGA), Arg89, and Gln196 each bind substrate. Asp237 serves as the catalytic Proton donor. 247 to 248 (NK) is a substrate binding site.

It belongs to the eIF-2B alpha/beta/delta subunits family. MtnA subfamily.

It carries out the reaction 5-(methylsulfanyl)-alpha-D-ribose 1-phosphate = 5-(methylsulfanyl)-D-ribulose 1-phosphate. Its pathway is amino-acid biosynthesis; L-methionine biosynthesis via salvage pathway; L-methionine from S-methyl-5-thio-alpha-D-ribose 1-phosphate: step 1/6. Its function is as follows. Catalyzes the interconversion of methylthioribose-1-phosphate (MTR-1-P) into methylthioribulose-1-phosphate (MTRu-1-P). The sequence is that of Methylthioribose-1-phosphate isomerase from Syntrophotalea carbinolica (strain DSM 2380 / NBRC 103641 / GraBd1) (Pelobacter carbinolicus).